We begin with the raw amino-acid sequence, 152 residues long: MKCPACQHNGTRVLDSRPVDEGRSIRRRRECESCNYRFTTFEKVEEIPLIVVKKEGIREEFSREKMLRGLIKACEKRPVALKQLEDICFEIEKELRNQGVSEVKSDMIGEMVMDRLAKIDEVAYVRFASVYRQFKDINVFIDELKDLIKKER.

Residues 3 to 34 (CPACQHNGTRVLDSRPVDEGRSIRRRRECESC) fold into a zinc finger. One can recognise an ATP-cone domain in the interval 49 to 139 (LIVVKKEGIR…VYRQFKDINV (91 aa)).

It belongs to the NrdR family. Zn(2+) serves as cofactor.

Negatively regulates transcription of bacterial ribonucleotide reductase nrd genes and operons by binding to NrdR-boxes. The chain is Transcriptional repressor NrdR from Bacillus licheniformis (strain ATCC 14580 / DSM 13 / JCM 2505 / CCUG 7422 / NBRC 12200 / NCIMB 9375 / NCTC 10341 / NRRL NRS-1264 / Gibson 46).